The following is a 627-amino-acid chain: Threonine--tRNA ligase (627 aa).

Residues 1-147 form an editing domain region; that stretch reads MRMLLIHSDY…TIVPSGEAKA (147 aa). Residues 208-507 are catalytic; it reads PHVRIMLEQE…QSKGIKPMFP (300 aa). Residues Cys-300, His-352, and His-476 each coordinate Zn(2+).

This sequence belongs to the class-II aminoacyl-tRNA synthetase family. In terms of assembly, homodimer. Requires Zn(2+) as cofactor.

The protein resides in the cytoplasm. The enzyme catalyses tRNA(Thr) + L-threonine + ATP = L-threonyl-tRNA(Thr) + AMP + diphosphate + H(+). Its function is as follows. Catalyzes the attachment of threonine to tRNA(Thr) in a two-step reaction: L-threonine is first activated by ATP to form Thr-AMP and then transferred to the acceptor end of tRNA(Thr). Also edits incorrectly charged L-seryl-tRNA(Thr). This chain is Threonine--tRNA ligase, found in Thermococcus onnurineus (strain NA1).